A 208-amino-acid chain; its full sequence is Coat protein (208 aa).

This sequence belongs to the potexvirus capsid protein family.

The protein localises to the virion. In terms of biological role, required for genome encapsidation. Forms ribonucleoprotein complexes along with TGB1 helicase and viral RNA. This is Coat protein from Trifolium (WCMV).